The primary structure comprises 320 residues: MRQTKIGILLANLGTPDAPTPEAVKRYLKQFLSDRRVVDTSRLLWWPLLRGVILPLRSPRVAKLYASVWMEGGSPLMVYSRQQQQALAQRLPETPVALGMSYGSPSLESAVDELLAEHVDHIVVLPLYPQFSCSTVGAVWDELARILARKRSIPGISFIRDYADNHDYINALANSVRASFAKHGEPDLLLLSYHGIPQRYADEGDDYPQRCRTTTRELASALGMAPEKVMMTFQSRFGREPWLMPYTDETLKMLGEKGVGHIQVMCPGFAADCLETLEEIAEQNREVFLGAGGKKYEYIPALNATPEHIEMMANLVAAYR.

Residues histidine 194 and glutamate 275 each contribute to the Fe cation site.

It belongs to the ferrochelatase family. In terms of assembly, monomer.

The protein resides in the cytoplasm. The catalysed reaction is heme b + 2 H(+) = protoporphyrin IX + Fe(2+). Its pathway is porphyrin-containing compound metabolism; protoheme biosynthesis; protoheme from protoporphyrin-IX: step 1/1. Its function is as follows. Catalyzes the ferrous insertion into protoporphyrin IX. This is Ferrochelatase from Shigella sonnei (strain Ss046).